The chain runs to 282 residues: Release factor glutamine methyltransferase (282 aa).

Asp-141, Phe-169, and Asn-186 together coordinate S-adenosyl-L-methionine. 186–189 contributes to the substrate binding site; it reads NPPY.

This sequence belongs to the protein N5-glutamine methyltransferase family. PrmC subfamily.

It carries out the reaction L-glutaminyl-[peptide chain release factor] + S-adenosyl-L-methionine = N(5)-methyl-L-glutaminyl-[peptide chain release factor] + S-adenosyl-L-homocysteine + H(+). Its function is as follows. Methylates the class 1 translation termination release factors RF1/PrfA and RF2/PrfB on the glutamine residue of the universally conserved GGQ motif. In Mycoplasma mycoides subsp. mycoides SC (strain CCUG 32753 / NCTC 10114 / PG1), this protein is Release factor glutamine methyltransferase.